The primary structure comprises 170 residues: Probable calcium-binding protein CML29 (170 aa).

EF-hand domains are found at residues Ser-27–Asp-62, Lys-63–Gly-98, and Ala-138–Leu-170. The Ca(2+) site is built by Asp-40, Asp-42, Asp-44, Glu-51, Asp-76, Asp-78, Asp-80, Lys-82, Glu-87, Asp-151, Asp-153, Asp-155, and Glu-162.

Its function is as follows. Potential calcium sensor. The chain is Probable calcium-binding protein CML29 (CML29) from Oryza sativa subsp. japonica (Rice).